A 377-amino-acid chain; its full sequence is cAMP-dependent protein kinase type II regulatory subunit (377 aa).

Residues 48–69 (ERPSVSHTDQSTDDQLSVNSQD) show a composition bias toward polar residues. The disordered stretch occupies residues 48–78 (ERPSVSHTDQSTDDQLSVNSQDADAEPPVMA). Ser-51, Ser-58, Ser-64, Ser-67, and Ser-84 each carry phosphoserine. The short motif at 81-85 (RRKSV) is the Pseudophosphorylation motif element. A Phosphotyrosine modification is found at Tyr-90. 3',5'-cyclic AMP contacts are provided by residues 124–239 (LFRS…LLNS), Glu-189, Arg-198, 242–362 (MLKA…YESQ), Glu-311, and Arg-320.

The protein belongs to the cAMP-dependent kinase regulatory chain family. As to quaternary structure, tetramer, composed of 2 regulatory (R) and 2 catalytic (C) subunits. In the presence of cAMP it dissociates into 2 active monomeric C subunits and an R dimer. Interacts with Akap200. In terms of processing, the pseudophosphorylation site binds to the substrate-binding region of the catalytic chain but is not phosphorylated. The physiological significance of phosphorylations by other kinases is unclear. Detected in follicle cells, germline-derived cells, germline line stem cells and outer rim of ring canals of nurse cells throughout oogenesis (at protein level).

Its subcellular location is the cytoplasm. The protein localises to the cell membrane. In terms of biological role, regulatory subunit of the cAMP-dependent protein kinases involved in cAMP signaling in cells. Mediates membrane association by binding to anchoring proteins, such as Akap200. Might play an essential role in the regulation of neuronal activity in the brain. The sequence is that of cAMP-dependent protein kinase type II regulatory subunit (Pka-R2) from Drosophila melanogaster (Fruit fly).